The following is a 485-amino-acid chain: NADH-quinone oxidoreductase subunit N (485 aa).

A run of 14 helical transmembrane segments spans residues 8–28, 35–55, 78–98, 104–124, 125–145, 159–179, 203–223, 235–255, 271–291, 297–317, 327–347, 374–394, 408–427, and 449–469; these read LIAL…MLGI, FINA…LYFV, GLVI…LVGY, EFYL…SANH, LASL…LVGY, YMLL…LLYA, VLAG…LVPF, PAPV…AVVM, MVLS…AISQ, LLGY…IAVQ, GVYL…VSLM, AVMT…GFIG, WWLT…YYLR, and ALTA…LLGV.

It belongs to the complex I subunit 2 family. NDH-1 is composed of 13 different subunits. Subunits NuoA, H, J, K, L, M, N constitute the membrane sector of the complex.

It is found in the cell inner membrane. It carries out the reaction a quinone + NADH + 5 H(+)(in) = a quinol + NAD(+) + 4 H(+)(out). In terms of biological role, NDH-1 shuttles electrons from NADH, via FMN and iron-sulfur (Fe-S) centers, to quinones in the respiratory chain. The immediate electron acceptor for the enzyme in this species is believed to be ubiquinone. Couples the redox reaction to proton translocation (for every two electrons transferred, four hydrogen ions are translocated across the cytoplasmic membrane), and thus conserves the redox energy in a proton gradient. The protein is NADH-quinone oxidoreductase subunit N of Serratia proteamaculans (strain 568).